The chain runs to 263 residues: 3-methyl-2-oxobutanoate hydroxymethyltransferase (263 aa).

Mg(2+)-binding residues include D45 and D84. Residues 45-46, D84, and K112 each bind 3-methyl-2-oxobutanoate; that span reads DS. E114 provides a ligand contact to Mg(2+). Catalysis depends on E180, which acts as the Proton acceptor.

This sequence belongs to the PanB family. In terms of assembly, homodecamer; pentamer of dimers. It depends on Mg(2+) as a cofactor.

The protein localises to the cytoplasm. It catalyses the reaction 3-methyl-2-oxobutanoate + (6R)-5,10-methylene-5,6,7,8-tetrahydrofolate + H2O = 2-dehydropantoate + (6S)-5,6,7,8-tetrahydrofolate. It functions in the pathway cofactor biosynthesis; (R)-pantothenate biosynthesis; (R)-pantoate from 3-methyl-2-oxobutanoate: step 1/2. Functionally, catalyzes the reversible reaction in which hydroxymethyl group from 5,10-methylenetetrahydrofolate is transferred onto alpha-ketoisovalerate to form ketopantoate. The polypeptide is 3-methyl-2-oxobutanoate hydroxymethyltransferase (Citrobacter koseri (strain ATCC BAA-895 / CDC 4225-83 / SGSC4696)).